Reading from the N-terminus, the 162-residue chain is Functional amyloid chaperone FapA (162 aa).

The N-terminal stretch at 1–28 (MSGSSLRIVVPALLVIVGSVPVSLPAHA) is a signal peptide.

It belongs to the FapA family. In terms of assembly, monomer in solution. Interacts with FapC but not FapB in vitro.

It is found in the periplasm. Functionally, an intrinsically disordered chaperone for fibril amyloid FapC that guards against fibrillation within the periplasm. Upon overexpression of the endogenous six-gene locus (fapA-fapF), cells form large clumps during liquid growth, make large amounts of biofilm and produce amyloid fibrils. The chain is Functional amyloid chaperone FapA from Pseudomonas aeruginosa (strain ATCC 15692 / DSM 22644 / CIP 104116 / JCM 14847 / LMG 12228 / 1C / PRS 101 / PAO1).